The following is a 183-amino-acid chain: ATP synthase subunit delta (183 aa).

The protein belongs to the ATPase delta chain family. In terms of assembly, F-type ATPases have 2 components, F(1) - the catalytic core - and F(0) - the membrane proton channel. F(1) has five subunits: alpha(3), beta(3), gamma(1), delta(1), epsilon(1). F(0) has three main subunits: a(1), b(2) and c(10-14). The alpha and beta chains form an alternating ring which encloses part of the gamma chain. F(1) is attached to F(0) by a central stalk formed by the gamma and epsilon chains, while a peripheral stalk is formed by the delta and b chains.

Its subcellular location is the cell inner membrane. Functionally, f(1)F(0) ATP synthase produces ATP from ADP in the presence of a proton or sodium gradient. F-type ATPases consist of two structural domains, F(1) containing the extramembraneous catalytic core and F(0) containing the membrane proton channel, linked together by a central stalk and a peripheral stalk. During catalysis, ATP synthesis in the catalytic domain of F(1) is coupled via a rotary mechanism of the central stalk subunits to proton translocation. Its function is as follows. This protein is part of the stalk that links CF(0) to CF(1). It either transmits conformational changes from CF(0) to CF(1) or is implicated in proton conduction. The polypeptide is ATP synthase subunit delta (Desulfatibacillum aliphaticivorans).